We begin with the raw amino-acid sequence, 307 residues long: Thiamine-monophosphate kinase (307 aa).

The Mg(2+) site is built by Asp26, Thr37, Thr38, and Asp39. His46 is a substrate binding site. Residues Asp68 and Asp117 each coordinate Mg(2+). Residues 116-117 (GD) and Arg140 each bind ATP. Residue Asp207 participates in Mg(2+) binding. Thr209 contacts ATP. Position 210 (Asp210) interacts with Mg(2+). Substrate-binding residues include Glu254 and Phe304.

This sequence belongs to the thiamine-monophosphate kinase family.

The enzyme catalyses thiamine phosphate + ATP = thiamine diphosphate + ADP. It functions in the pathway cofactor biosynthesis; thiamine diphosphate biosynthesis; thiamine diphosphate from thiamine phosphate: step 1/1. In terms of biological role, catalyzes the ATP-dependent phosphorylation of thiamine-monophosphate (TMP) to form thiamine-pyrophosphate (TPP), the active form of vitamin B1. The protein is Thiamine-monophosphate kinase of Leptospira interrogans serogroup Icterohaemorrhagiae serovar Lai (strain 56601).